We begin with the raw amino-acid sequence, 816 residues long: MSSIARPPDPCLVAVVLIARSRAGPRFVFHYPPRPLADNALRPPKARRTSRSRSRQNSKGNDSTSSDDSHSSSDEDEEEAPSQNLNNSNNSNNNSYIAGSRRSSNFGLDDSNTLSENQRPGSISSSRAYLRKRGANSDAETDSGVGSDRQEDGSRESDGPNRVPWESILGLPVDVWEKLLSPSRSWHKRRFELGINDLAFVGWPVFVREDGNWRKQRRKKKKKQRAEWESGELGHNDATEDSQDDGNDAVAASTETLSPFSALHPISQRPSVPNSRSSQMSSEPLDADDKDMMTMFNVVFVLDPPLLEYSMRVREIYDNVIKKFSKALKWEQSRTNYVWRECQHILNIKEKAKEKRSSLNSLYADIISQSSLARAIRTLYTSISASKIASVTLSPDVSISLQIPPLTSTPYLPGPTDQAYPGLWLTTADSISPADDPMTDDNSAPHQVLAKHFALLLLDNEATIIKDVEAAGGALAPPLVHYIRCSSPTKSFVQISQISGMPLPTIQFLASHLVYWRRARAIPPLHQRDTYIVSPNCDLSKLEVASAAYKVAFPTLPSLPKMLSALSGTPRPYGNFIPSKDHKATYFLILAWLLRGGWVTQLRSFARVKVSPEIKMAVELAIRREEVDKYLSKGKPPVATSDKEDSVNDERTEGSDFDDASSSSSSSLASHGSGDATPMPNRFRADTGVDLTHSLLDQTASLKTSSLILLPHKVSPLESRWLDEIVARFPDNAPDFVGNTTEVDSATPIPAKSLKEVWPTYLKYFNGYDALEKIPVREGLKRKLVSQVLTRLGLVTGQSSTELDPREQVLVSFRHW.

An N-terminal signal peptide occupies residues 1–23 (MSSIARPPDPCLVAVVLIARSRA). Disordered stretches follow at residues 26-166 (RFVF…VPWE), 213-249 (WRKQ…GNDA), 262-287 (ALHP…PLDA), and 632-684 (SKGK…NRFR). Basic residues predominate over residues 44–56 (PKARRTSRSRSRQ). The segment covering 82–95 (SQNLNNSNNSNNNS) has biased composition (low complexity). Over residues 101–127 (RRSSNFGLDDSNTLSENQRPGSISSSR) the composition is skewed to polar residues. Residues 148–159 (DRQEDGSRESDG) are compositionally biased toward basic and acidic residues. The segment covering 214 to 224 (RKQRRKKKKKQ) has biased composition (basic residues). The span at 225-238 (RAEWESGELGHNDA) shows a compositional bias: basic and acidic residues. A compositionally biased stretch (polar residues) spans 268–282 (QRPSVPNSRSSQMSS). The span at 641–654 (SDKEDSVNDERTEG) shows a compositional bias: basic and acidic residues. A compositionally biased stretch (low complexity) spans 660-676 (ASSSSSSSLASHGSGDA).

It belongs to the NPR3 family.

In terms of biological role, mediates inactivation of the TORC1 complex in response to amino acid starvation. Required for meiotic nuclear division. This is Nitrogen permease regulator 3 (npr3) from Emericella nidulans (strain FGSC A4 / ATCC 38163 / CBS 112.46 / NRRL 194 / M139) (Aspergillus nidulans).